The following is a 269-amino-acid chain: Bis(5'-nucleosyl)-tetraphosphatase, symmetrical (269 aa).

This sequence belongs to the Ap4A hydrolase family.

It catalyses the reaction P(1),P(4)-bis(5'-adenosyl) tetraphosphate + H2O = 2 ADP + 2 H(+). Hydrolyzes diadenosine 5',5'''-P1,P4-tetraphosphate to yield ADP. This chain is Bis(5'-nucleosyl)-tetraphosphatase, symmetrical, found in Vibrio cholerae serotype O1 (strain ATCC 39541 / Classical Ogawa 395 / O395).